A 160-amino-acid chain; its full sequence is Ribosome maturation factor RimP (160 aa).

It belongs to the RimP family.

It is found in the cytoplasm. Functionally, required for maturation of 30S ribosomal subunits. The polypeptide is Ribosome maturation factor RimP (Syntrophus aciditrophicus (strain SB)).